The sequence spans 345 residues: Aspartate-semialdehyde dehydrogenase (345 aa).

NADP(+) contacts are provided by residues 11 to 14 (TGQV) and 39 to 40 (RS). Arg-99 is a binding site for phosphate. Catalysis depends on Cys-130, which acts as the Acyl-thioester intermediate. Residue Gln-157 coordinates substrate. Position 160 to 161 (160 to 161 (SG)) interacts with NADP(+). Lys-227 provides a ligand contact to phosphate. Arg-249 contributes to the substrate binding site. His-256 (proton acceptor) is an active-site residue. Asn-325 is an NADP(+) binding site.

It belongs to the aspartate-semialdehyde dehydrogenase family. As to quaternary structure, homodimer.

It catalyses the reaction L-aspartate 4-semialdehyde + phosphate + NADP(+) = 4-phospho-L-aspartate + NADPH + H(+). It functions in the pathway amino-acid biosynthesis; L-lysine biosynthesis via DAP pathway; (S)-tetrahydrodipicolinate from L-aspartate: step 2/4. It participates in amino-acid biosynthesis; L-methionine biosynthesis via de novo pathway; L-homoserine from L-aspartate: step 2/3. The protein operates within amino-acid biosynthesis; L-threonine biosynthesis; L-threonine from L-aspartate: step 2/5. Catalyzes the NADPH-dependent formation of L-aspartate-semialdehyde (L-ASA) by the reductive dephosphorylation of L-aspartyl-4-phosphate. The chain is Aspartate-semialdehyde dehydrogenase from Mycobacterium bovis (strain ATCC BAA-935 / AF2122/97).